A 509-amino-acid polypeptide reads, in one-letter code: Histidine--tRNA ligase, cytoplasmic (509 aa).

At Ala2 the chain carries N-acetylalanine. Residues 3 to 59 (ERAALEELVKLQGERVRGLKQQKASAELIEEEVAKLLKLKAQLGPDESKQKFVLKTP) form the WHEP-TRS domain. Ser66 is subject to Phosphoserine. Residues 130–132 (DLT), Arg157, Gln173, Asp177, Arg326, and 330–331 (YY) contribute to the L-histidine site. Phosphoserine is present on Ser356.

The protein belongs to the class-II aminoacyl-tRNA synthetase family. In terms of assembly, homodimer. In terms of tissue distribution, brain, heart, liver and kidney.

The protein localises to the cytoplasm. The enzyme catalyses tRNA(His) + L-histidine + ATP = L-histidyl-tRNA(His) + AMP + diphosphate + H(+). Catalyzes the ATP-dependent ligation of histidine to the 3'-end of its cognate tRNA, via the formation of an aminoacyl-adenylate intermediate (His-AMP). Plays a role in axon guidance. The sequence is that of Histidine--tRNA ligase, cytoplasmic from Homo sapiens (Human).